A 971-amino-acid chain; its full sequence is 116 kDa U5 small nuclear ribonucleoprotein component (971 aa).

An N-acetylmethionine modification is found at Met1. A disordered region spans residues 1–52; the sequence is MDTDLYDEFGNYIGPELDSDEDDDELGRETKDLDEDEDEDEDDVGEHEDDHP. The segment covering 17–47 has biased composition (acidic residues); that stretch reads LDSDEDDDELGRETKDLDEDEDEDEDDVGEH. Residue Ser19 is modified to Phosphoserine. Lys63 is covalently cross-linked (Glycyl lysine isopeptide (Lys-Gly) (interchain with G-Cter in SUMO1); alternate). A Glycyl lysine isopeptide (Lys-Gly) (interchain with G-Cter in SUMO2); alternate cross-link involves residue Lys63. Position 85 is a phosphothreonine (Thr85). The 283-residue stretch at 126–408 folds into the tr-type G domain; sequence ELIRNVTLCG…GIHLTKEELK (283 aa). GTP-binding positions include 135–142, 203–207, and 257–260; these read GHLHHGKT, DTPGH, and NKID.

Belongs to the TRAFAC class translation factor GTPase superfamily. Classic translation factor GTPase family. EF-G/EF-2 subfamily. In terms of assembly, component of the U5 snRNP and the U4/U6-U5 tri-snRNP complex, a building block of the spliceosome. The U4/U6-U5 tri-snRNP complex is composed of the U4, U6 and U5 snRNAs and at least PRPF3, PRPF4, PRPF6, PRPF8, PRPF31, SNRNP200, TXNL4A, SNRNP40, DDX23, CD2BP2, PPIH, SNU13, EFTUD2, SART1 and USP39. Component of the pre-catalytic, catalytic and post-catalytic spliceosome complexes. Component of the minor spliceosome, which splices U12-type introns. Within this complex, interacts with CRIPT. Interacts with ERBB4 and PRPF8. Interacts with PIH1D1. Interacts with RPAP3 and URI1 in a ZNHIT2-dependent manner. Interacts with NRDE2. Interacts with FAM50A. Interacts with UBL5.

The protein resides in the nucleus. In terms of biological role, required for pre-mRNA splicing as component of the spliceosome, including pre-catalytic, catalytic and post-catalytic spliceosomal complexes. Component of the U5 snRNP and the U4/U6-U5 tri-snRNP complex, a building block of the spliceosome. As a component of the minor spliceosome, involved in the splicing of U12-type introns in pre-mRNAs. The chain is 116 kDa U5 small nuclear ribonucleoprotein component (Eftud2) from Mus musculus (Mouse).